Consider the following 507-residue polypeptide: Glycerol kinase 2 (507 aa).

Position 16 (Thr16) interacts with ADP. Residues Thr16, Thr17, and Ser18 each contribute to the ATP site. Sn-glycerol 3-phosphate is bound at residue Thr16. Residue Arg20 coordinates ADP. 4 residues coordinate sn-glycerol 3-phosphate: Arg86, Glu87, Tyr138, and Asp248. 5 residues coordinate glycerol: Arg86, Glu87, Tyr138, Asp248, and Gln249. Positions 270 and 314 each coordinate ADP. The ATP site is built by Thr270, Gly314, Gln318, and Gly415. ADP contacts are provided by Gly415 and Asn419.

It belongs to the FGGY kinase family.

It carries out the reaction glycerol + ATP = sn-glycerol 3-phosphate + ADP + H(+). It functions in the pathway polyol metabolism; glycerol degradation via glycerol kinase pathway; sn-glycerol 3-phosphate from glycerol: step 1/1. Its activity is regulated as follows. Inhibited by fructose 1,6-bisphosphate (FBP). Functionally, key enzyme in the regulation of glycerol uptake and metabolism. Catalyzes the phosphorylation of glycerol to yield sn-glycerol 3-phosphate. In Streptomyces avermitilis (strain ATCC 31267 / DSM 46492 / JCM 5070 / NBRC 14893 / NCIMB 12804 / NRRL 8165 / MA-4680), this protein is Glycerol kinase 2.